A 543-amino-acid polypeptide reads, in one-letter code: Chaperonin GroEL (543 aa).

ATP is bound by residues 29-32 (TLGP), 86-90 (DGTTT), glycine 413, 477-479 (DAL), and aspartate 493.

Belongs to the chaperonin (HSP60) family. In terms of assembly, forms a cylinder of 14 subunits composed of two heptameric rings stacked back-to-back. Interacts with the co-chaperonin GroES.

Its subcellular location is the cytoplasm. The enzyme catalyses ATP + H2O + a folded polypeptide = ADP + phosphate + an unfolded polypeptide.. Its function is as follows. Together with its co-chaperonin GroES, plays an essential role in assisting protein folding. The GroEL-GroES system forms a nano-cage that allows encapsulation of the non-native substrate proteins and provides a physical environment optimized to promote and accelerate protein folding. This chain is Chaperonin GroEL, found in Clostridium botulinum.